The sequence spans 715 residues: Fatty acid oxidation complex subunit alpha (715 aa).

The enoyl-CoA hydratase/isomerase stretch occupies residues M1–A190. D297 serves as a coordination point for substrate. A 3-hydroxyacyl-CoA dehydrogenase region spans residues K312–G715. NAD(+) is bound by residues M325, D344, V401–E403, K408, and S430. H451 functions as the For 3-hydroxyacyl-CoA dehydrogenase activity in the catalytic mechanism. Position 454 (N454) interacts with NAD(+). The substrate site is built by N501 and Y660.

In the N-terminal section; belongs to the enoyl-CoA hydratase/isomerase family. The protein in the C-terminal section; belongs to the 3-hydroxyacyl-CoA dehydrogenase family. As to quaternary structure, heterotetramer of two alpha chains (FadB) and two beta chains (FadA).

It catalyses the reaction a (3S)-3-hydroxyacyl-CoA + NAD(+) = a 3-oxoacyl-CoA + NADH + H(+). It carries out the reaction a (3S)-3-hydroxyacyl-CoA = a (2E)-enoyl-CoA + H2O. The catalysed reaction is a 4-saturated-(3S)-3-hydroxyacyl-CoA = a (3E)-enoyl-CoA + H2O. The enzyme catalyses (3S)-3-hydroxybutanoyl-CoA = (3R)-3-hydroxybutanoyl-CoA. It catalyses the reaction a (3Z)-enoyl-CoA = a 4-saturated (2E)-enoyl-CoA. It carries out the reaction a (3E)-enoyl-CoA = a 4-saturated (2E)-enoyl-CoA. The protein operates within lipid metabolism; fatty acid beta-oxidation. Its function is as follows. Involved in the aerobic and anaerobic degradation of long-chain fatty acids via beta-oxidation cycle. Catalyzes the formation of 3-oxoacyl-CoA from enoyl-CoA via L-3-hydroxyacyl-CoA. It can also use D-3-hydroxyacyl-CoA and cis-3-enoyl-CoA as substrate. The chain is Fatty acid oxidation complex subunit alpha from Pseudomonas aeruginosa (strain LESB58).